A 127-amino-acid chain; its full sequence is uncharacterized protein (127 aa).

3 consecutive transmembrane segments (helical) span residues 20–42 (NMIW…FMSS), 54–76 (IYFC…IFVY), and 91–110 (WILI…ASFT).

The protein resides in the membrane. It localises to the cytoplasm. This is an uncharacterized protein from Schizosaccharomyces pombe (strain 972 / ATCC 24843) (Fission yeast).